The primary structure comprises 466 residues: Glutamate--tRNA ligase 1 (466 aa).

The 'HIGH' region motif lies at 9-19 (PSPTGYLHIGG). Residues Cys98, Cys100, Cys125, and Glu127 each contribute to the Zn(2+) site. Positions 236–240 (KLSKR) match the 'KMSKS' region motif. Lys239 contributes to the ATP binding site.

The protein belongs to the class-I aminoacyl-tRNA synthetase family. Glutamate--tRNA ligase type 1 subfamily. Monomer. Requires Zn(2+) as cofactor.

The protein resides in the cytoplasm. It carries out the reaction tRNA(Glu) + L-glutamate + ATP = L-glutamyl-tRNA(Glu) + AMP + diphosphate. In terms of biological role, catalyzes the attachment of glutamate to tRNA(Glu) in a two-step reaction: glutamate is first activated by ATP to form Glu-AMP and then transferred to the acceptor end of tRNA(Glu). The polypeptide is Glutamate--tRNA ligase 1 (Acidithiobacillus ferrooxidans (strain ATCC 53993 / BNL-5-31) (Leptospirillum ferrooxidans (ATCC 53993))).